A 341-amino-acid polypeptide reads, in one-letter code: Anthranilate phosphoribosyltransferase (341 aa).

Residues Gly-79, 82-83, Thr-87, 89-92, 107-115, and Ser-119 contribute to the 5-phospho-alpha-D-ribose 1-diphosphate site; these read GD, NIST, and KHGGRSVSS. Gly-79 provides a ligand contact to anthranilate. Residue Ser-91 participates in Mg(2+) binding. Anthranilate is bound at residue Arg-165. Mg(2+) contacts are provided by Asp-224 and Glu-225.

The protein belongs to the anthranilate phosphoribosyltransferase family. As to quaternary structure, homodimer. Mg(2+) serves as cofactor.

It carries out the reaction N-(5-phospho-beta-D-ribosyl)anthranilate + diphosphate = 5-phospho-alpha-D-ribose 1-diphosphate + anthranilate. It functions in the pathway amino-acid biosynthesis; L-tryptophan biosynthesis; L-tryptophan from chorismate: step 2/5. Its function is as follows. Catalyzes the transfer of the phosphoribosyl group of 5-phosphorylribose-1-pyrophosphate (PRPP) to anthranilate to yield N-(5'-phosphoribosyl)-anthranilate (PRA). The polypeptide is Anthranilate phosphoribosyltransferase (Ruminiclostridium cellulolyticum (strain ATCC 35319 / DSM 5812 / JCM 6584 / H10) (Clostridium cellulolyticum)).